We begin with the raw amino-acid sequence, 339 residues long: Ketol-acid reductoisomerase (NADP(+)) (339 aa).

The KARI N-terminal Rossmann domain maps to 1–182 (MRVYYDRDAD…GGGRSGIIET (182 aa)). Residues 24–27 (YGSQ), Lys-48, Ser-51, Thr-53, and 83–86 (DELQ) each bind NADP(+). Residue His-108 is part of the active site. Residue Gly-134 coordinates NADP(+). The KARI C-terminal knotted domain occupies 183–328 (NFREECETDL…AKLRGMMPWI (146 aa)). The Mg(2+) site is built by Asp-191, Glu-195, Glu-227, and Glu-231. A substrate-binding site is contributed by Ser-252.

The protein belongs to the ketol-acid reductoisomerase family. The cofactor is Mg(2+).

It carries out the reaction (2R)-2,3-dihydroxy-3-methylbutanoate + NADP(+) = (2S)-2-acetolactate + NADPH + H(+). The catalysed reaction is (2R,3R)-2,3-dihydroxy-3-methylpentanoate + NADP(+) = (S)-2-ethyl-2-hydroxy-3-oxobutanoate + NADPH + H(+). Its pathway is amino-acid biosynthesis; L-isoleucine biosynthesis; L-isoleucine from 2-oxobutanoate: step 2/4. It participates in amino-acid biosynthesis; L-valine biosynthesis; L-valine from pyruvate: step 2/4. Involved in the biosynthesis of branched-chain amino acids (BCAA). Catalyzes an alkyl-migration followed by a ketol-acid reduction of (S)-2-acetolactate (S2AL) to yield (R)-2,3-dihydroxy-isovalerate. In the isomerase reaction, S2AL is rearranged via a Mg-dependent methyl migration to produce 3-hydroxy-3-methyl-2-ketobutyrate (HMKB). In the reductase reaction, this 2-ketoacid undergoes a metal-dependent reduction by NADPH to yield (R)-2,3-dihydroxy-isovalerate. This is Ketol-acid reductoisomerase (NADP(+)) from Rhizobium etli (strain ATCC 51251 / DSM 11541 / JCM 21823 / NBRC 15573 / CFN 42).